Reading from the N-terminus, the 680-residue chain is Methionine--tRNA ligase (680 aa).

The 'HIGH' region motif lies at proline 15 to histidine 25. 4 residues coordinate Zn(2+): cysteine 147, cysteine 150, cysteine 160, and cysteine 163. The 'KMSKS' region signature appears at lysine 332–serine 336. Position 335 (threonine 335) interacts with ATP. Positions aspartate 579–lysine 680 constitute a tRNA-binding domain.

Belongs to the class-I aminoacyl-tRNA synthetase family. MetG type 1 subfamily. As to quaternary structure, homodimer. The cofactor is Zn(2+).

It localises to the cytoplasm. The enzyme catalyses tRNA(Met) + L-methionine + ATP = L-methionyl-tRNA(Met) + AMP + diphosphate. In terms of biological role, is required not only for elongation of protein synthesis but also for the initiation of all mRNA translation through initiator tRNA(fMet) aminoacylation. The polypeptide is Methionine--tRNA ligase (Porphyromonas gingivalis (strain ATCC BAA-308 / W83)).